The chain runs to 1324 residues: Mediator of RNA polymerase II transcription subunit 13 (1324 aa).

Disordered regions lie at residues 296–346, 386–455, 535–590, 607–631, 694–816, and 1151–1198; these read ESGV…PPEA, FFDD…ATTA, GRFF…EPEI, HDDKPAKKIDSSNDTTNSDGNSNNS, KGGQ…VPSA, and TGSD…PDIY. The segment covering 298–331 has biased composition (polar residues); that stretch reads GVNTNESTAAQPQPAQNGTNSMAPAAGTTNATTQ. Positions 398 to 407 are enriched in acidic residues; the sequence is DGDNDNGNDN. Residues 408–442 show a composition bias toward basic and acidic residues; the sequence is DNDKADAMDVDVKEEAKKEEMIKKETKEEVPVKEE. Over residues 546 to 566 the composition is skewed to low complexity; it reads DNEGSSDNTGDSSDSGDGSES. 2 stretches are compositionally biased toward basic and acidic residues: residues 567–578 and 607–617; these read VPRDVKRQKVDE and HDDKPAKKIDS. Composition is skewed to low complexity over residues 618–631 and 724–743; these read SNDTTNSDGNSNNS and SNASGVPSGSSGAQASQMGA. Residues 750 to 784 are compositionally biased toward polar residues; that stretch reads LSPSRGATPQPEGSSPETRPSNWTPGITSQVNSAA. Low complexity-rich tracts occupy residues 785–816 and 1172–1184; these read SSPVPLQQHQQQQQSFSPMSPQTPAQAPVPSA and TGAAGAASTGSAP.

The protein belongs to the Mediator complex subunit 13 family. As to quaternary structure, component of the SRB8-11 complex, which itself associates with the Mediator complex.

It is found in the nucleus. Its function is as follows. Component of the SRB8-11 complex. The SRB8-11 complex is a regulatory module of the Mediator complex which is itself involved in regulation of basal and activated RNA polymerase II-dependent transcription. The SRB8-11 complex may be involved in the transcriptional repression of a subset of genes regulated by Mediator. It may inhibit the association of the Mediator complex with RNA polymerase II to form the holoenzyme complex. In Yarrowia lipolytica (strain CLIB 122 / E 150) (Yeast), this protein is Mediator of RNA polymerase II transcription subunit 13 (SSN2).